The primary structure comprises 184 residues: Large ribosomal subunit protein uL6 (184 aa).

Belongs to the universal ribosomal protein uL6 family. In terms of assembly, part of the 50S ribosomal subunit.

Functionally, this protein binds to the 23S rRNA, and is important in its secondary structure. It is located near the subunit interface in the base of the L7/L12 stalk, and near the tRNA binding site of the peptidyltransferase center. The protein is Large ribosomal subunit protein uL6 of Thermotoga maritima (strain ATCC 43589 / DSM 3109 / JCM 10099 / NBRC 100826 / MSB8).